We begin with the raw amino-acid sequence, 339 residues long: MIDPVNNFKIPEEWIARSGLPREELEKNVASGMIVILSDGSVLKRGYTTGTTASAAAKAAVLSLKKTVDSVSVPTPVGLRAYLEVSKSSPGRAVVKKIPNDHESDVTRGLEFVGEAREAEGISILGGKGIGIVKRDGLQVPKGKPAINPKPMEQIRAAVQEAVEELGLKGAEVTILIPEGERIGKETLNSRIGVEGGISVLGSTGFVEPWNDHLGEMRGDLIRCTDKVVLTTGRIGMKYSHMLFPDYTVVMVGSRISEGLDNASGDIIICGLPGLVLKWGNPKMLEGSGYATVVEMLEKAPEHERLKEAFEMAVEKGKGARIVVIDRDGSVLMDSKSGK.

Belongs to the CbiD family.

It carries out the reaction Co-precorrin-5B + S-adenosyl-L-methionine = Co-precorrin-6A + S-adenosyl-L-homocysteine. The protein operates within cofactor biosynthesis; adenosylcobalamin biosynthesis; cob(II)yrinate a,c-diamide from sirohydrochlorin (anaerobic route): step 6/10. Its function is as follows. Catalyzes the methylation of C-1 in cobalt-precorrin-5B to form cobalt-precorrin-6A. This is Cobalt-precorrin-5B C(1)-methyltransferase from Methanosarcina acetivorans (strain ATCC 35395 / DSM 2834 / JCM 12185 / C2A).